The following is a 422-amino-acid chain: MYDFVIIGGGIIGMSTAMQLIDVYPDARIALLEKESAPACHQTGHNSGVIHAGVYYTPGSLKAQFCLAGNRATKAFCDQNGIRYDNCGKMLVATSDLEMERMRALWERTAANGIEREWLNADELREREPNITGLGGIFVPSSGIVSYRDVTAAMAKIFQSRGGEIIYNAEVSGLNEHKNGVVIRTRQGGEYEASTLISCSGLMADRLVKMLGLEPGFIICPFRGEYFRLAPEHNQIVNHLIYPIPDPAMPFLGVHLTRMIDGSVTVGPNAVLAFKREGYRKRDFSFSDTLEILGSSGIRRVLQNHLRSGLGEMKNSLCKSGYLRLVQKYCPRLSLSDLQPWPAGVRAQAVSPDGKLIDDFLFVTTPRTIHTCNAPSPAATSAIPIGAHIVSKVQTLLASQSNPGRTLRAARSVDALHAAFNQ.

This sequence belongs to the L2HGDH family. FAD serves as cofactor.

The protein localises to the cell inner membrane. The enzyme catalyses (S)-2-hydroxyglutarate + a quinone = a quinol + 2-oxoglutarate. It functions in the pathway amino-acid degradation. In terms of biological role, catalyzes the dehydrogenation of L-2-hydroxyglutarate (L2HG) to alpha-ketoglutarate and couples to the respiratory chain by feeding electrons from the reaction into the membrane quinone pool. Functions in a L-lysine degradation pathway that proceeds via cadaverine, glutarate and L-2-hydroxyglutarate. The protein is L-2-hydroxyglutarate dehydrogenase of Escherichia coli (strain K12).